Here is a 725-residue protein sequence, read N- to C-terminus: 1,4-alpha-glucan branching enzyme GlgB (725 aa).

The active-site Nucleophile is the D403. Catalysis depends on E456, which acts as the Proton donor.

The protein belongs to the glycosyl hydrolase 13 family. GlgB subfamily. Monomer.

It carries out the reaction Transfers a segment of a (1-&gt;4)-alpha-D-glucan chain to a primary hydroxy group in a similar glucan chain.. It functions in the pathway glycan biosynthesis; glycogen biosynthesis. Catalyzes the formation of the alpha-1,6-glucosidic linkages in glycogen by scission of a 1,4-alpha-linked oligosaccharide from growing alpha-1,4-glucan chains and the subsequent attachment of the oligosaccharide to the alpha-1,6 position. The sequence is that of 1,4-alpha-glucan branching enzyme GlgB from Pectobacterium atrosepticum (strain SCRI 1043 / ATCC BAA-672) (Erwinia carotovora subsp. atroseptica).